Consider the following 107-residue polypeptide: MKNIGQMLKQAQQLQTRMAEVQEELKAMDVSGQSAAGMCVVTLDGKGGVRSIKIDPSLVDPKETEVMEDLIVAAFNDAKAKVDEMVKEKMSELTGGLKLPPGMSLPF.

The protein belongs to the YbaB/EbfC family. Homodimer.

It localises to the cytoplasm. It is found in the nucleoid. In terms of biological role, binds to DNA and alters its conformation. May be involved in regulation of gene expression, nucleoid organization and DNA protection. The sequence is that of Nucleoid-associated protein Rru_A3472 from Rhodospirillum rubrum (strain ATCC 11170 / ATH 1.1.1 / DSM 467 / LMG 4362 / NCIMB 8255 / S1).